The sequence spans 255 residues: tRNA uridine(34) hydroxylase (255 aa).

The Rhodanese domain occupies 125–219 (AAPDTLLIDT…YLEGIPESES (95 aa)). Cys-179 functions as the Cysteine persulfide intermediate in the catalytic mechanism.

This sequence belongs to the TrhO family.

The catalysed reaction is uridine(34) in tRNA + AH2 + O2 = 5-hydroxyuridine(34) in tRNA + A + H2O. Functionally, catalyzes oxygen-dependent 5-hydroxyuridine (ho5U) modification at position 34 in tRNAs. This chain is tRNA uridine(34) hydroxylase, found in Nitrobacter hamburgensis (strain DSM 10229 / NCIMB 13809 / X14).